We begin with the raw amino-acid sequence, 180 residues long: Large ribosomal subunit protein bL17 (180 aa).

A disordered region spans residues 134 to 180 (AQAKAKKAAAMPTEESEAKPAEEGDVVGASEPDAKAPEEPPAEAPEN).

This sequence belongs to the bacterial ribosomal protein bL17 family. As to quaternary structure, part of the 50S ribosomal subunit. Contacts protein L32.

The sequence is that of Large ribosomal subunit protein bL17 from Mycobacterium tuberculosis (strain ATCC 25177 / H37Ra).